We begin with the raw amino-acid sequence, 329 residues long: NADH-quinone oxidoreductase subunit H 2 (329 aa).

Transmembrane regions (helical) follow at residues 12–32 (GAKIALIFFVVLTLAAYLVFA), 78–98 (WLFYLAPAMAAVPAILTFAVI), 120–140 (VGLLFFLALSSIAVYGVALGG), 159–179 (LISYELSMGLSLVPTVMLAGS), 191–211 (GVWFIAYQPVAFLIFLISIAA), 242–262 (LFFVGEYINIIVLGGLATTFF), 270–290 (LLPPFVWFSVKTLAFAFFFIW), and 309–329 (KVLTPLALLNILITGWVLMFV).

It belongs to the complex I subunit 1 family. As to quaternary structure, NDH-1 is composed of 14 different subunits. Subunits NuoA, H, J, K, L, M, N constitute the membrane sector of the complex.

The protein localises to the cell inner membrane. The enzyme catalyses a quinone + NADH + 5 H(+)(in) = a quinol + NAD(+) + 4 H(+)(out). Its function is as follows. NDH-1 shuttles electrons from NADH, via FMN and iron-sulfur (Fe-S) centers, to quinones in the respiratory chain. The immediate electron acceptor for the enzyme in this species is believed to be ubiquinone. Couples the redox reaction to proton translocation (for every two electrons transferred, four hydrogen ions are translocated across the cytoplasmic membrane), and thus conserves the redox energy in a proton gradient. This subunit may bind ubiquinone. This Geobacter sulfurreducens (strain ATCC 51573 / DSM 12127 / PCA) protein is NADH-quinone oxidoreductase subunit H 2.